Consider the following 1082-residue polypeptide: Importin-4 (1082 aa).

Position 1 is an N-acetylmethionine (Met-1). The Importin N-terminal domain maps to 24 to 90; that stretch reads ATEQLQTILR…KSLVLTALQK (67 aa). HEAT repeat units lie at residues 348–385, 390–427, 431–471, 475–513, 896–933, and 937–975; these read KLCPHVMPMLEEALRSEDPYQRKAGFLVLAVLSDGAGD, RLLYPLLQIVCKGLDDPSQIVRNAALFALGQFSENLQP, SYSE…NLGP, PYLPELMECMLQPLKNPSKARTKELAVSAIGAIATAAQD, QFVSRLFPVLLNNAREADPEVRSNAIFGLGVLAEHGGC, and DHFPKLLGLLLPLLARERHDRVRDNICGALARVLMASPV.

Belongs to the importin beta family. In terms of assembly, found in a cytosolic complex with ASF1 (ASF1A or ASF1B) and histones H3 and H4.

The protein localises to the cytoplasm. It is found in the nucleus. In terms of biological role, nuclear transport receptor that mediates nuclear import of proteins, such as histones, RPS3A, TNP2 and VDR. Serves as receptor for nuclear localization signals (NLS) in cargo substrates. Is thought to mediate docking of the importin/substrate complex to the nuclear pore complex (NPC) through binding to nucleoporin and the complex is subsequently translocated through the pore by an energy requiring, Ran-dependent mechanism. At the nucleoplasmic side of the NPC, Ran binds to the importin, the importin/substrate complex dissociates and importin is re-exported from the nucleus to the cytoplasm where GTP hydrolysis releases Ran. The directionality of nuclear import is thought to be conferred by an asymmetric distribution of the GTP- and GDP-bound forms of Ran between the cytoplasm and nucleus. Mediates the nuclear import of the histone H3-H4 dimer when in complex with ASF1 (ASF1A or ASF1B). Mediates the ligand-independent nuclear import of vitamin D receptor (VDR). The sequence is that of Importin-4 (Ipo4) from Mus musculus (Mouse).